Reading from the N-terminus, the 125-residue chain is Small ribosomal subunit protein uS12 (125 aa).

The residue at position 89 (Asp-89) is a 3-methylthioaspartic acid. Residues Leu-104–Ala-125 are disordered. Over residues Ser-113–Ala-125 the composition is skewed to basic residues.

The protein belongs to the universal ribosomal protein uS12 family. In terms of assembly, part of the 30S ribosomal subunit. Contacts proteins S8 and S17. May interact with IF1 in the 30S initiation complex.

Its function is as follows. With S4 and S5 plays an important role in translational accuracy. In terms of biological role, interacts with and stabilizes bases of the 16S rRNA that are involved in tRNA selection in the A site and with the mRNA backbone. Located at the interface of the 30S and 50S subunits, it traverses the body of the 30S subunit contacting proteins on the other side and probably holding the rRNA structure together. The combined cluster of proteins S8, S12 and S17 appears to hold together the shoulder and platform of the 30S subunit. The polypeptide is Small ribosomal subunit protein uS12 (Leptothrix cholodnii (strain ATCC 51168 / LMG 8142 / SP-6) (Leptothrix discophora (strain SP-6))).